The chain runs to 400 residues: MGFITKAIPLALAAASVINGAEIMETRAGVQTLADKYIVVMNDGMTDKDFDSHRSWVNRTHRRRLIRRGAKAMGGMKHTYRFPTGLKGYSGHFDEQMINEISKRADVKYIERDARVQINAIEQQDNVPSWGLARVGSKEPGGTTYYYDGTAGEGSTAYVIDTGTDIQHEEFEGRATWGANFVDDMDMDCNGHGTHVSGTIGGKTFGVAKKSNVVAVKVLDCNGSGSNSGVIMGMEWATKDAQQKGADKAVANMSLGGAFSQASNDAAAAIAKGGVFLAVAAGNDNVDAADSSPASEPSICTVAASTEQDSKADFSNFGQVVDVYAPGDSITSAKPGGGSQVLSGTSMATPHVAGLGAYLIGLGKGGGPGLCDTIKQTAIDVIQNPGASTTSKLINNGSGM.

Positions 1–20 (MGFITKAIPLALAAASVING) are cleaved as a signal peptide. A propeptide spanning residues 21 to 119 (AEIMETRAGV…IERDARVQIN (99 aa)) is cleaved from the precursor. In terms of domain architecture, Inhibitor I9 spans 36–118 (KYIVVMNDGM…YIERDARVQI (83 aa)). The N-linked (GlcNAc...) asparagine glycan is linked to asparagine 58. One can recognise a Peptidase S8 domain in the interval 129-400 (SWGLARVGSK…SKLINNGSGM (272 aa)). Active-site charge relay system residues include aspartate 161 and histidine 192. Residues asparagine 222 and asparagine 252 are each glycosylated (N-linked (GlcNAc...) asparagine). Serine 346 functions as the Charge relay system in the catalytic mechanism. N-linked (GlcNAc...) asparagine glycosylation occurs at asparagine 396.

It belongs to the peptidase S8 family.

Its subcellular location is the secreted. Its function is as follows. Secreted subtilisin-like serine protease with keratinolytic activity that contributes to pathogenicity. This chain is Subtilisin-like protease 7 (SUB7), found in Arthroderma benhamiae (Trichophyton mentagrophytes).